A 431-amino-acid polypeptide reads, in one-letter code: Divalent metal cation transporter MntH (431 aa).

The next 11 membrane-spanning stretches (helical) occupy residues 33–53 (LLKF…PGNF), 61–81 (SSFN…AIFL), 110–130 (WIFW…EFIG), 141–161 (IPMI…VYME), 170–190 (TIIA…LFLA), 211–231 (AVLI…IYLH), 258–278 (ILIA…VSAA), 307–327 (GAFG…GTMA), 347–367 (IITM…MRVL), 368–388 (VLSQ…MLLI), and 406–426 (IVGF…LYLT).

The protein belongs to the NRAMP family.

The protein localises to the cell membrane. In terms of biological role, h(+)-stimulated, divalent metal cation uptake system. This Clostridium acetobutylicum (strain ATCC 824 / DSM 792 / JCM 1419 / IAM 19013 / LMG 5710 / NBRC 13948 / NRRL B-527 / VKM B-1787 / 2291 / W) protein is Divalent metal cation transporter MntH.